Consider the following 808-residue polypeptide: Piwi-like protein 1 (808 aa).

One can recognise a PAZ domain in the interval 214–333; the sequence is RINRVLNENN…IPGELCYLCG (120 aa). The interval 300–322 is disordered; the sequence is SMVRPKEKTENEPEGPTETDQSL. Residues 492 to 790 form the Piwi domain; the sequence is HMALVFIPDD…LAELVGKIHR (299 aa).

This sequence belongs to the argonaute family. Piwi subfamily. As to expression, expressed in dividing adult somatic stem cells (neoblasts).

The polypeptide is Piwi-like protein 1 (wi-1) (Schmidtea mediterranea (Freshwater planarian flatworm)).